Consider the following 193-residue polypeptide: ATP-dependent Clp protease proteolytic subunit (193 aa).

Ser-98 (nucleophile) is an active-site residue. Residue His-123 is part of the active site.

It belongs to the peptidase S14 family. As to quaternary structure, fourteen ClpP subunits assemble into 2 heptameric rings which stack back to back to give a disk-like structure with a central cavity, resembling the structure of eukaryotic proteasomes.

The protein localises to the cytoplasm. The catalysed reaction is Hydrolysis of proteins to small peptides in the presence of ATP and magnesium. alpha-casein is the usual test substrate. In the absence of ATP, only oligopeptides shorter than five residues are hydrolyzed (such as succinyl-Leu-Tyr-|-NHMec, and Leu-Tyr-Leu-|-Tyr-Trp, in which cleavage of the -Tyr-|-Leu- and -Tyr-|-Trp bonds also occurs).. In terms of biological role, cleaves peptides in various proteins in a process that requires ATP hydrolysis. Has a chymotrypsin-like activity. Plays a major role in the degradation of misfolded proteins. The polypeptide is ATP-dependent Clp protease proteolytic subunit (Clostridium acetobutylicum (strain ATCC 824 / DSM 792 / JCM 1419 / IAM 19013 / LMG 5710 / NBRC 13948 / NRRL B-527 / VKM B-1787 / 2291 / W)).